Consider the following 317-residue polypeptide: Transaldolase (317 aa).

Lys-126 serves as the catalytic Schiff-base intermediate with substrate.

It belongs to the transaldolase family. Type 1 subfamily. Homodimer.

It is found in the cytoplasm. The enzyme catalyses D-sedoheptulose 7-phosphate + D-glyceraldehyde 3-phosphate = D-erythrose 4-phosphate + beta-D-fructose 6-phosphate. The protein operates within carbohydrate degradation; pentose phosphate pathway; D-glyceraldehyde 3-phosphate and beta-D-fructose 6-phosphate from D-ribose 5-phosphate and D-xylulose 5-phosphate (non-oxidative stage): step 2/3. Its function is as follows. Transaldolase is important for the balance of metabolites in the pentose-phosphate pathway. The chain is Transaldolase from Burkholderia multivorans (strain ATCC 17616 / 249).